Consider the following 454-residue polypeptide: GTPase Obg (454 aa).

The 158-residue stretch at 2–159 (SDFVDEAVLH…VDIRLELKTI (158 aa)) folds into the Obg domain. The tract at residues 60–87 (YQRRPHRKAENGAPGQGSNRSGASGADL) is disordered. Residues 160–335 (ADVGLVGFPS…LAYALGEQVA (176 aa)) form the OBG-type G domain. GTP-binding positions include 166–173 (GFPSAGKS), 191–195 (FTTLV), 212–215 (DVPG), 287–290 (NKID), and 316–318 (SAA). Mg(2+) is bound by residues Ser-173 and Thr-193. The OCT domain occupies 353–435 (PREIGEIPFQ…DNPVVFDWDP (83 aa)).

This sequence belongs to the TRAFAC class OBG-HflX-like GTPase superfamily. OBG GTPase family. Monomer. Mg(2+) serves as cofactor.

It is found in the cytoplasm. Functionally, an essential GTPase which binds GTP, GDP and possibly (p)ppGpp with moderate affinity, with high nucleotide exchange rates and a fairly low GTP hydrolysis rate. Plays a role in control of the cell cycle, stress response, ribosome biogenesis and in those bacteria that undergo differentiation, in morphogenesis control. In Thermobifida fusca (strain YX), this protein is GTPase Obg.